A 614-amino-acid polypeptide reads, in one-letter code: V-type proton ATPase catalytic subunit A isoform 2 (614 aa).

Residue Ser142 is modified to Phosphoserine. ATP is bound at residue 247–254; sequence GAFGCGKT.

This sequence belongs to the ATPase alpha/beta chains family. V-ATPase is a heteromultimeric enzyme made up of two complexes: the ATP-hydrolytic V1 complex and the proton translocation V0 complex. The V1 complex consists of three catalytic AB heterodimers that form a heterohexamer, three peripheral stalks each consisting of EG heterodimers, one central rotor including subunits D and F, and the regulatory subunits C and H. The proton translocation complex V0 consists of the proton transport subunit a, a ring of proteolipid subunits c9c'', rotary subunit d, subunits e and f, and the accessory subunits VhaAC45 and ATP6AP2.

The enzyme catalyses ATP + H2O + 4 H(+)(in) = ADP + phosphate + 5 H(+)(out). ATP hydrolysis occurs at the interface between the nucleotide-binding domains of subunits A and B. ATP hydrolysis triggers a conformational change in the subunits D and F, which induces a shift of subunit d. The c-ring is subsequently rotated and results in a continuous proton translocation across the membrane. Its function is as follows. Catalytic subunit of the V1 complex of vacuolar(H+)-ATPase (V-ATPase), a multisubunit enzyme composed of a peripheral complex (V1) that hydrolyzes ATP and a membrane integral complex (V0) that translocates protons. V-ATPase is responsible for acidifying and maintaining the pH of intracellular compartments and in some cell types, is targeted to the plasma membrane, where it is responsible for acidifying the extracellular environment. The chain is V-type proton ATPase catalytic subunit A isoform 2 (Vha68-2) from Drosophila melanogaster (Fruit fly).